Consider the following 281-residue polypeptide: DegV domain-containing protein YqaC (281 aa).

The region spanning 3 to 279 is the DegV domain; the sequence is LAVITDSSAD…LNTVAYGISP (277 aa). Residues Thr-60 and Ser-93 each contribute to the hexadecanoate site.

May bind long-chain fatty acids, such as palmitate, and may play a role in lipid transport or fatty acid metabolism. This is DegV domain-containing protein YqaC (yqaC) from Lactococcus lactis subsp. lactis (strain IL1403) (Streptococcus lactis).